A 380-amino-acid chain; its full sequence is DNA replication and repair protein RecF (380 aa).

Gly-30–Ser-37 provides a ligand contact to ATP.

This sequence belongs to the RecF family.

The protein resides in the cytoplasm. Functionally, the RecF protein is involved in DNA metabolism; it is required for DNA replication and normal SOS inducibility. RecF binds preferentially to single-stranded, linear DNA. It also seems to bind ATP. This is DNA replication and repair protein RecF from Crocosphaera subtropica (strain ATCC 51142 / BH68) (Cyanothece sp. (strain ATCC 51142)).